A 400-amino-acid polypeptide reads, in one-letter code: Phosphoglycerate kinase (400 aa).

Substrate-binding positions include 21 to 23 (DFN), arginine 37, 60 to 63 (HLGR), arginine 121, and arginine 154. ATP contacts are provided by residues lysine 204, glutamate 326, and 355–358 (GGDS).

Belongs to the phosphoglycerate kinase family. Monomer.

The protein localises to the cytoplasm. The enzyme catalyses (2R)-3-phosphoglycerate + ATP = (2R)-3-phospho-glyceroyl phosphate + ADP. Its pathway is carbohydrate degradation; glycolysis; pyruvate from D-glyceraldehyde 3-phosphate: step 2/5. The polypeptide is Phosphoglycerate kinase (Chloroflexus aurantiacus (strain ATCC 29366 / DSM 635 / J-10-fl)).